Reading from the N-terminus, the 136-residue chain is Protein NrdI (136 aa).

This sequence belongs to the NrdI family.

Its function is as follows. Probably involved in ribonucleotide reductase function. The protein is Protein NrdI of Erwinia tasmaniensis (strain DSM 17950 / CFBP 7177 / CIP 109463 / NCPPB 4357 / Et1/99).